Reading from the N-terminus, the 295-residue chain is Acetylglutamate kinase (295 aa).

Substrate-binding positions include 66–67 (GG), Arg-88, and Asn-193.

The protein belongs to the acetylglutamate kinase family. ArgB subfamily.

Its subcellular location is the cytoplasm. The catalysed reaction is N-acetyl-L-glutamate + ATP = N-acetyl-L-glutamyl 5-phosphate + ADP. The protein operates within amino-acid biosynthesis; L-arginine biosynthesis; N(2)-acetyl-L-ornithine from L-glutamate: step 2/4. Its function is as follows. Catalyzes the ATP-dependent phosphorylation of N-acetyl-L-glutamate. This chain is Acetylglutamate kinase, found in Gluconobacter oxydans (strain 621H) (Gluconobacter suboxydans).